A 133-amino-acid polypeptide reads, in one-letter code: Large-conductance mechanosensitive channel (133 aa).

2 consecutive transmembrane segments (helical) span residues 10–30 (FAVKGNVMDMAVGVIIGGAFG) and 76–96 (GAFIQNIFDFLIIAIAVFSMV).

Belongs to the MscL family. In terms of assembly, homopentamer.

It is found in the cell inner membrane. In terms of biological role, channel that opens in response to stretch forces in the membrane lipid bilayer. May participate in the regulation of osmotic pressure changes within the cell. This Haemophilus ducreyi (strain 35000HP / ATCC 700724) protein is Large-conductance mechanosensitive channel.